The chain runs to 556 residues: Membrane protein insertase YidC (556 aa).

Transmembrane regions (helical) follow at residues 6–26, 332–352, 358–378, 428–448, and 501–521; these read IVLYMALALIGLSLWNAWQID, LDLTVDYGILWFLSSLLFSLM, VVGNWGWSIVLVTVLIKLAFY, LGGCLPILIQIPVFIALYWVL, and VMMFLPILFTGLFWNFPSGLV.

The protein belongs to the OXA1/ALB3/YidC family. Type 1 subfamily. As to quaternary structure, interacts with the Sec translocase complex via SecD. Specifically interacts with transmembrane segments of nascent integral membrane proteins during membrane integration.

It is found in the cell inner membrane. Its function is as follows. Required for the insertion and/or proper folding and/or complex formation of integral membrane proteins into the membrane. Involved in integration of membrane proteins that insert both dependently and independently of the Sec translocase complex, as well as at least some lipoproteins. Aids folding of multispanning membrane proteins. This Legionella pneumophila (strain Corby) protein is Membrane protein insertase YidC.